A 401-amino-acid chain; its full sequence is Argininosuccinate synthase (401 aa).

ATP-binding positions include 10–18 and Ala-37; that span reads AYSGGLDTS. Tyr-89 contacts L-citrulline. Gly-119 is a binding site for ATP. L-aspartate is bound by residues Thr-121, Asn-125, and Asp-126. Asn-125 is an L-citrulline binding site. The L-citrulline site is built by Arg-129, Ser-178, Ser-187, Glu-263, and Tyr-275.

Belongs to the argininosuccinate synthase family. Type 1 subfamily. In terms of assembly, homotetramer.

It localises to the cytoplasm. It catalyses the reaction L-citrulline + L-aspartate + ATP = 2-(N(omega)-L-arginino)succinate + AMP + diphosphate + H(+). It participates in amino-acid biosynthesis; L-arginine biosynthesis; L-arginine from L-ornithine and carbamoyl phosphate: step 2/3. This chain is Argininosuccinate synthase, found in Buchnera aphidicola subsp. Schizaphis graminum (strain Sg).